We begin with the raw amino-acid sequence, 132 residues long: Small ribosomal subunit protein uS8 (132 aa).

Belongs to the universal ribosomal protein uS8 family. In terms of assembly, part of the 30S ribosomal subunit. Contacts proteins S5 and S12.

One of the primary rRNA binding proteins, it binds directly to 16S rRNA central domain where it helps coordinate assembly of the platform of the 30S subunit. The protein is Small ribosomal subunit protein uS8 of Rickettsia typhi (strain ATCC VR-144 / Wilmington).